The sequence spans 147 residues: Hemoglobin subunit beta-1 (147 aa).

Val-2 is subject to N-acetylvaline. Residues 3–147 form the Globin domain; that stretch reads HLTGEEKAAV…VATALAHKYH (145 aa). N6-succinyllysine is present on Lys-18. Ser-45 carries the post-translational modification Phosphoserine. Residue Lys-60 is modified to N6-succinyllysine. Heme b contacts are provided by His-64 and His-93. An Asymmetric dimethylarginine modification is found at Arg-105. Phosphothreonine is present on Thr-124.

It belongs to the globin family. In terms of assembly, hb1 is a heterotetramer of two alpha chains and two beta-1 chains. As to expression, red blood cells.

In terms of biological role, involved in oxygen transport from the lung to the various peripheral tissues. This Chalinolobus morio (Chocolate-wattled bat) protein is Hemoglobin subunit beta-1 (HBB1).